The chain runs to 760 residues: Molybdenum cofactor sulfurase 2 (760 aa).

Residue K223 is modified to N6-(pyridoxal phosphate)lysine. Residue C389 is part of the active site. One can recognise an MOSC domain in the interval 608–758 (QSDDEARTLR…LHCGSPLQVV (151 aa)).

Belongs to the class-V pyridoxal-phosphate-dependent aminotransferase family. MOCOS subfamily. Pyridoxal 5'-phosphate is required as a cofactor.

It catalyses the reaction Mo-molybdopterin + L-cysteine + AH2 = thio-Mo-molybdopterin + L-alanine + A + H2O. In terms of biological role, sulfurates the molybdenum cofactor. Sulfation of molybdenum is essential for xanthine dehydrogenase (XDH) and aldehyde oxidase (ADO) enzymes in which molybdenum cofactor is liganded by 1 oxygen and 1 sulfur atom in active form. This chain is Molybdenum cofactor sulfurase 2, found in Culex quinquefasciatus (Southern house mosquito).